A 507-amino-acid chain; its full sequence is Cytochrome P450 7B1 (507 aa).

3 helical membrane-spanning segments follow: residues 14 to 34 (PLAL…LFLL), 178 to 198 (IFAF…YGKI), and 287 to 307 (FLWA…YYIL). Position 447 (Cys-447) interacts with heme.

It belongs to the cytochrome P450 family. Heme serves as cofactor. As to expression, highly expressed in brain structures including the corpus callosum, the anterior commissure and fornix. The hippocampal expression is particularly prominent in the dentate gyrus. Expressed in liver and kidney. The hepatic expression is sexually dimorphic, predominantly detected in male liver while barely detectable in females. Expressed in lymph nodes and spleens, in both lymphoid and stromal compartments. Higher expression is detected in fibroblastic reticular cells, a type of stromal cells in the lymph nodes. Also expressed at high levels in the outer follicle and at the B cell-T cell boundary of splenic germinal centers. Expressed in dendritic cells (DCs) subpopulations being most abundant in CD8-positive DCs.

Its subcellular location is the endoplasmic reticulum membrane. The protein resides in the microsome membrane. It catalyses the reaction 25-hydroxycholesterol + reduced [NADPH--hemoprotein reductase] + O2 = 7alpha,25-dihydroxycholesterol + oxidized [NADPH--hemoprotein reductase] + H2O + H(+). The catalysed reaction is (25R)-cholest-5-ene-3beta,26-diol + reduced [NADPH--hemoprotein reductase] + O2 = (25R)-cholest-5-en-3beta,7alpha,26-triol + oxidized [NADPH--hemoprotein reductase] + H2O + H(+). The enzyme catalyses (24S)-hydroxycholesterol + reduced [NADPH--hemoprotein reductase] + O2 = (24S)-7alpha-dihydroxycholesterol + oxidized [NADPH--hemoprotein reductase] + H2O + H(+). It carries out the reaction (24S)-25-epoxycholesterol + reduced [NADPH--hemoprotein reductase] + O2 = (24S,25)-epoxy-7alpha-hydroxycholesterol + oxidized [NADPH--hemoprotein reductase] + H2O + H(+). It catalyses the reaction (22R)-hydroxycholesterol + reduced [NADPH--hemoprotein reductase] + O2 = (22R,7alpha)-dihydroxycholesterol + oxidized [NADPH--hemoprotein reductase] + H2O + H(+). The catalysed reaction is androst-5-en-3beta,17beta-diol + reduced [NADPH--hemoprotein reductase] + O2 = androst-5-en-3beta,7alpha,17beta-triol + oxidized [NADPH--hemoprotein reductase] + H2O + H(+). The enzyme catalyses 5alpha-androstane-3beta,17beta-diol + reduced [NADPH--hemoprotein reductase] + O2 = 5alpha-androstane-3beta,6alpha,17beta-triol + oxidized [NADPH--hemoprotein reductase] + H2O + H(+). It carries out the reaction 3beta-hydroxyandrost-5-en-17-one + reduced [NADPH--hemoprotein reductase] + O2 = 3beta,7alpha-dihydroxyandrost-5-en-17-one + oxidized [NADPH--hemoprotein reductase] + H2O + H(+). It catalyses the reaction 3beta-hydroxy-5alpha-androstan-17-one + reduced [NADPH--hemoprotein reductase] + O2 = 3beta,7alpha-dihydroxy-5alpha-androstan-17-one + oxidized [NADPH--hemoprotein reductase] + H2O + H(+). The catalysed reaction is pregnenolone + reduced [NADPH--hemoprotein reductase] + O2 = 7alpha-hydroxypregnenolone + oxidized [NADPH--hemoprotein reductase] + H2O + H(+). It participates in lipid metabolism; bile acid biosynthesis. It functions in the pathway steroid hormone biosynthesis. With respect to regulation, inhibited by drugs voriconazole and metyrapone. In terms of biological role, a cytochrome P450 monooxygenase involved in the metabolism of endogenous oxysterols and steroid hormones, including neurosteroids. Mechanistically, uses molecular oxygen inserting one oxygen atom into a substrate, and reducing the second into a water molecule, with two electrons provided by NADPH via cytochrome P450 reductase (CPR; NADPH-ferrihemoprotein reductase). Catalyzes the hydroxylation of carbon hydrogen bonds of steroids with a preference for 7-alpha position. Usually metabolizes steroids carrying a hydroxy group at position 3, functioning as a 3-hydroxy steroid 7-alpha hydroxylase. Hydroxylates oxysterols, including 25-hydroxycholesterol and (25R)-cholest-5-ene-3beta,26-diol toward 7-alpha hydroxy derivatives, which may be transported to the liver and converted to bile acids. Via its product 7-alpha,25-dihydroxycholesterol, a ligand for the chemotactic G protein-coupled receptor GPR183/EBI2, regulates B cell migration in germinal centers of lymphoid organs, thus guiding efficient maturation of plasma B cells and overall antigen-specific humoral immune response. 7-alpha hydroxylates neurosteroids, including 3beta-hydroxyandrost-5-en-17-one (dehydroepiandrosterone) and pregnenolone, both involved in hippocampus-associated memory and learning. Metabolizes androstanoids toward 6- or 7-alpha hydroxy derivatives. The protein is Cytochrome P450 7B1 of Mus musculus (Mouse).